An 88-amino-acid polypeptide reads, in one-letter code: MALAVRVVYCGAUGYKPKYLQLKEKLEHEFPGCLDICGEGTPQVTGFFEVTVAGKLVHSKKRGDGYVDTESKFRKLVTAIKAALAQCQ.

Positions 10 to 13 (CGAU) form a cross-link, cysteinyl-selenocysteine (Cys-Sec); redox-active. Residue selenocysteine 13 is a non-standard amino acid, selenocysteine. Residue cysteine 37 is modified to S-glutathionyl cysteine.

The protein belongs to the SelWTH family. Selenoprotein W subfamily. Interacts with DPYSL2, PRDX1, YWHAB, YWHAG, HSP70 and HSP90. In terms of tissue distribution, in the embryo, expressed in the developing nervous system and in mesoderm-derived tissues such as heart and limbs. In the adult, predominantly expressed in brain, skeletal muscle and heart.

Its subcellular location is the cytoplasm. Plays a role as a glutathione (GSH)-dependent antioxidant. May be involved in a redox-related process. May play a role in the myopathies of selenium deficiency. The chain is Selenoprotein W from Mus musculus (Mouse).